The sequence spans 196 residues: Probable GTP-binding protein EngB (196 aa).

One can recognise an EngB-type G domain in the interval 24–196; that stretch reads ELSEVALSGR…IWNLIEPYIS (173 aa). GTP contacts are provided by residues 32 to 39, 59 to 63, 77 to 80, 144 to 147, and 176 to 178; these read GRSNVGKS, GKTQT, DVPG, TKED, and YSS. Positions 39 and 61 each coordinate Mg(2+).

Belongs to the TRAFAC class TrmE-Era-EngA-EngB-Septin-like GTPase superfamily. EngB GTPase family. Mg(2+) serves as cofactor.

Functionally, necessary for normal cell division and for the maintenance of normal septation. The polypeptide is Probable GTP-binding protein EngB (Staphylococcus aureus (strain Mu3 / ATCC 700698)).